The following is a 572-amino-acid chain: Arginine--tRNA ligase (572 aa).

The short motif at 122-132 (PNLAKEMHVGH) is the 'HIGH' region element.

This sequence belongs to the class-I aminoacyl-tRNA synthetase family. As to quaternary structure, monomer.

Its subcellular location is the cytoplasm. The catalysed reaction is tRNA(Arg) + L-arginine + ATP = L-arginyl-tRNA(Arg) + AMP + diphosphate. The polypeptide is Arginine--tRNA ligase (Neisseria meningitidis serogroup C / serotype 2a (strain ATCC 700532 / DSM 15464 / FAM18)).